A 253-amino-acid chain; its full sequence is Adenosylcobinamide-GDP ribazoletransferase (253 aa).

The next 4 membrane-spanning stretches (helical) occupy residues 33 to 53, 106 to 126, 132 to 152, and 178 to 198; these read ISPIIVGISLGLIESVAYLIL, VGSGGIGLLLVYLSIQIVALL, LYTIFYLISSNVLSMSLSLYI, and ILLLELIPFISLYNVIVFIIF.

The protein belongs to the CobS family. Mg(2+) is required as a cofactor.

The protein resides in the cell membrane. The catalysed reaction is alpha-ribazole + adenosylcob(III)inamide-GDP = adenosylcob(III)alamin + GMP + H(+). It carries out the reaction alpha-ribazole 5'-phosphate + adenosylcob(III)inamide-GDP = adenosylcob(III)alamin 5'-phosphate + GMP + H(+). Its pathway is cofactor biosynthesis; adenosylcobalamin biosynthesis; adenosylcobalamin from cob(II)yrinate a,c-diamide: step 7/7. Its function is as follows. Joins adenosylcobinamide-GDP and alpha-ribazole to generate adenosylcobalamin (Ado-cobalamin). Also synthesizes adenosylcobalamin 5'-phosphate from adenosylcobinamide-GDP and alpha-ribazole 5'-phosphate. The polypeptide is Adenosylcobinamide-GDP ribazoletransferase (Saccharolobus solfataricus (strain ATCC 35092 / DSM 1617 / JCM 11322 / P2) (Sulfolobus solfataricus)).